The sequence spans 162 residues: MQFTIASLIATAVLGLQMASAAPHAPGSSNAAIISQAQEQNTCGNAHLSCCESTDNSVSLTQEEEEGLLHLLGGTSSVLSDGLLGKYSGCSSLASVEGILGAGGNQGLVSGQCNNHVACCDAGDNELVGFLEPGVAVLKPNSDGIQNGLANVAVPCVPVQVL.

The signal sequence occupies residues 1 to 21; it reads MQFTIASLIATAVLGLQMASA. 4 disulfides stabilise this stretch: C43/C119, C50/C113, C51/C90, and C120/C156.

The protein belongs to the fungal hydrophobin family. Self-assembles to form functional amyloid fibrils called rodlets. Self-assembly into fibrillar rodlets occurs spontaneously at hydrophobic:hydrophilic interfaces and the rodlets further associate laterally to form amphipathic monolayers.

The protein resides in the secreted. The protein localises to the spore wall. Aerial growth, conidiation, and dispersal of filamentous fungi in the environment rely upon a capability of their secreting small amphipathic proteins called hydrophobins (HPBs) with low sequence identity. Class I can self-assemble into an outermost layer of rodlet bundles on aerial cell surfaces, conferring cellular hydrophobicity that supports fungal growth, development and dispersal; whereas Class II form highly ordered films at water-air interfaces through intermolecular interactions but contribute nothing to the rodlet structure. DewC is a class I hydrophobin that contributes to the hydrophobicity of the spore surface. This chain is Class I hydrophobin dewC, found in Emericella nidulans (strain FGSC A4 / ATCC 38163 / CBS 112.46 / NRRL 194 / M139) (Aspergillus nidulans).